Consider the following 499-residue polypeptide: Xylulose kinase (499 aa).

81 to 82 lines the substrate pocket; the sequence is MH. Aspartate 239 (proton acceptor) is an active-site residue.

Belongs to the FGGY kinase family.

It catalyses the reaction D-xylulose + ATP = D-xylulose 5-phosphate + ADP + H(+). In terms of biological role, catalyzes the phosphorylation of D-xylulose to D-xylulose 5-phosphate. The polypeptide is Xylulose kinase (Bacillus subtilis (strain 168)).